We begin with the raw amino-acid sequence, 213 residues long: Kynurenine formamidase (213 aa).

Trp-18 lines the substrate pocket. Zn(2+) is bound by residues His-48, His-52, and Asp-54. The active-site Proton donor/acceptor is His-58. 2 residues coordinate Zn(2+): His-160 and Glu-172.

Belongs to the Cyclase 1 superfamily. KynB family. Homodimer. Zn(2+) is required as a cofactor.

It catalyses the reaction N-formyl-L-kynurenine + H2O = L-kynurenine + formate + H(+). It functions in the pathway amino-acid degradation; L-tryptophan degradation via kynurenine pathway; L-kynurenine from L-tryptophan: step 2/2. Catalyzes the hydrolysis of N-formyl-L-kynurenine to L-kynurenine, the second step in the kynurenine pathway of tryptophan degradation. This chain is Kynurenine formamidase, found in Burkholderia multivorans (strain ATCC 17616 / 249).